The following is an 850-amino-acid chain: G-type lectin S-receptor-like serine/threonine-protein kinase CES101 (850 aa).

A signal peptide spans 1-22 (MWSNCIFLTLFTFYLFLGQSCC). The Extracellular segment spans residues 23-423 (QTDTLLQGQY…IKGSKLAATW (401 aa)). The Bulb-type lectin domain maps to 24–144 (TDTLLQGQYL…DSDGSMKRTL (121 aa)). Residues Asn-55, Asn-118, Asn-194, and Asn-374 are each glycosylated (N-linked (GlcNAc...) asparagine). The region spanning 334–416 (CSRFGYTFRE…PRTIYIRIKG (83 aa)) is the PAN domain. 2 disulfide bridges follow: Cys-367/Cys-390 and Cys-371/Cys-377. The helical transmembrane segment at 424 to 444 (LVVVASLFLIIPVTWLIIYLV) threads the bilayer. Residues 445 to 850 (LRKFKIKGTN…RVTITVMEAR (406 aa)) lie on the Cytoplasmic side of the membrane. Positions 527 to 816 (FSDANKLGEG…ALSLPKEPAF (290 aa)) constitute a Protein kinase domain. Residues 533–541 (LGEGGFGPV) and Lys-555 each bind ATP. A Phosphoserine modification is found at Ser-561. Residues 616-633 (LRKIVLDWKLRFRIMEGI) form a caM-binding region. The active-site Proton acceptor is Asp-652. At Ser-669 the chain carries Phosphoserine. Phosphothreonine is present on Thr-686. A phosphoserine mark is found at Ser-730 and Ser-838. The residue at position 845 (Thr-845) is a Phosphothreonine.

This sequence belongs to the protein kinase superfamily. Ser/Thr protein kinase family. In terms of tissue distribution, mostly expressed in leaves, and, to a lower extent, in roots and flowers.

The protein localises to the cell membrane. It carries out the reaction L-seryl-[protein] + ATP = O-phospho-L-seryl-[protein] + ADP + H(+). The enzyme catalyses L-threonyl-[protein] + ATP = O-phospho-L-threonyl-[protein] + ADP + H(+). Its function is as follows. Promotes the expression of genes involved in photosynthesis at least in dedifferentiated calli. This is G-type lectin S-receptor-like serine/threonine-protein kinase CES101 (CES101) from Arabidopsis thaliana (Mouse-ear cress).